A 682-amino-acid chain; its full sequence is Amphiphysin (682 aa).

2 coiled-coil regions span residues Ala-10–Val-84 and Asp-144–Leu-191. The region spanning Val-24–Asp-240 is the BAR domain. Disordered regions lie at residues Thr-244–Thr-310, Ile-446–Gly-470, Gly-501–Val-530, and Ala-561–Met-606. Residues Pro-261–Thr-274 are compositionally biased toward pro residues. Basic and acidic residues predominate over residues Val-503 to Gln-527. A compositionally biased stretch (polar residues) spans Thr-567–Pro-596. An SH3 domain is found at Gly-609–Glu-682.

As to quaternary structure, heterodimer with BIN1. Binds SH3GLB1. In terms of tissue distribution, is abundant in the forebrain and cerebellum. It is also found in the adrenal gland, anterior and posterior pituitary.

The protein localises to the cytoplasmic vesicle. It localises to the secretory vesicle. The protein resides in the synaptic vesicle membrane. It is found in the cytoplasm. Its subcellular location is the cytoskeleton. In terms of biological role, may participate in mechanisms of regulated exocytosis in synapses and certain endocrine cell types. May control the properties of the membrane associated cytoskeleton. The protein is Amphiphysin (AMPH) of Gallus gallus (Chicken).